The primary structure comprises 955 residues: Structure-specific endonuclease subunit SLX4 (955 aa).

Disordered regions lie at residues 75–173 (QAEQ…RTTS), 189–231 (PVTT…TVSR), 352–376 (GPSNDSKIPNQASPVKSKAPKKKPR), 539–608 (EMQK…PTKI), 621–648 (PIVASDVDSDNEPPPSNQQAYQMPPPPR), 705–784 (AAGQ…ASPD), and 819–846 (LDSDGEAGLSPSPSLSPEPVFSSPEKDS). Positions 123-137 (RKARKTANGVTKKKR) are enriched in basic residues. A compositionally biased stretch (polar residues) spans 150–159 (NEITTPTKNQ). A compositionally biased stretch (low complexity) spans 189–198 (PVTTSTTDLT). Basic residues predominate over residues 209–225 (TKSRVRKTSSAASRKKK). Polar residues predominate over residues 352 to 362 (GPSNDSKIPNQ). The segment covering 539–551 (EMQKSPSRSEPKG) has biased composition (basic and acidic residues). A compositionally biased stretch (polar residues) spans 579 to 601 (SANSAEHTLKTQASKSTHFASTT). Composition is skewed to low complexity over residues 705-720 (AAGQSSAFATTSRTSA) and 727-737 (KTSTAAAAAKS). Composition is skewed to basic residues over residues 738–748 (PTKRPVGRPRK) and 767–776 (KRPRGRPKKN). Residues 828–841 (SPSPSLSPEPVFSS) are compositionally biased toward low complexity.

This sequence belongs to the SLX4 family. Forms a heterodimer with SLX1. Post-translationally, phosphorylated in response to DNA damage.

Its subcellular location is the nucleus. Regulatory subunit of the SLX1-SLX4 structure-specific endonuclease that resolves DNA secondary structures generated during DNA repair and recombination. Has endonuclease activity towards branched DNA substrates, introducing single-strand cuts in duplex DNA close to junctions with ss-DNA. The protein is Structure-specific endonuclease subunit SLX4 of Pyricularia oryzae (strain 70-15 / ATCC MYA-4617 / FGSC 8958) (Rice blast fungus).